Here is a 192-residue protein sequence, read N- to C-terminus: uncharacterized protein (192 aa).

The first 17 residues, 1-17, serve as a signal peptide directing secretion; the sequence is MFLHLILLAGLAPVVYL.

This is an uncharacterized protein from Caenorhabditis elegans.